The following is a 466-amino-acid chain: A-type ATP synthase subunit B (466 aa).

It belongs to the ATPase alpha/beta chains family. As to quaternary structure, has multiple subunits with at least A(3), B(3), C, D, E, F, H, I and proteolipid K(x).

Its subcellular location is the cell membrane. Functionally, component of the A-type ATP synthase that produces ATP from ADP in the presence of a proton gradient across the membrane. The B chain is a regulatory subunit. This Metallosphaera sedula (strain ATCC 51363 / DSM 5348 / JCM 9185 / NBRC 15509 / TH2) protein is A-type ATP synthase subunit B.